The primary structure comprises 204 residues: Octanoyltransferase (204 aa).

One can recognise a BPL/LPL catalytic domain in the interval 27–202 (QGGEEALLLL…RFQPLLNLHL (176 aa)). Substrate contacts are provided by residues 65-72 (RGGDVTYH), 132-134 (SIG), and 145-147 (GFA). Catalysis depends on Cys-163, which acts as the Acyl-thioester intermediate.

This sequence belongs to the LipB family.

The protein resides in the cytoplasm. The catalysed reaction is octanoyl-[ACP] + L-lysyl-[protein] = N(6)-octanoyl-L-lysyl-[protein] + holo-[ACP] + H(+). Its pathway is protein modification; protein lipoylation via endogenous pathway; protein N(6)-(lipoyl)lysine from octanoyl-[acyl-carrier-protein]: step 1/2. Functionally, catalyzes the transfer of endogenously produced octanoic acid from octanoyl-acyl-carrier-protein onto the lipoyl domains of lipoate-dependent enzymes. Lipoyl-ACP can also act as a substrate although octanoyl-ACP is likely to be the physiological substrate. This Citrifermentans bemidjiense (strain ATCC BAA-1014 / DSM 16622 / JCM 12645 / Bem) (Geobacter bemidjiensis) protein is Octanoyltransferase.